Reading from the N-terminus, the 206-residue chain is Small ribosomal subunit protein uS5 (206 aa).

The disordered stretch occupies residues 1–42 (MENKTEVVVAENANNQTQPERKKFDRKPNRRPQGPKQFQKDD). The region spanning 43–106 (FEEKVVTIRR…KEAKKNLIRV (64 aa)) is the S5 DRBM domain.

The protein belongs to the universal ribosomal protein uS5 family. In terms of assembly, part of the 30S ribosomal subunit. Contacts proteins S4 and S8.

Functionally, with S4 and S12 plays an important role in translational accuracy. Located at the back of the 30S subunit body where it stabilizes the conformation of the head with respect to the body. In Mesoplasma florum (strain ATCC 33453 / NBRC 100688 / NCTC 11704 / L1) (Acholeplasma florum), this protein is Small ribosomal subunit protein uS5.